Reading from the N-terminus, the 397-residue chain is ATP-dependent RNA helicase eIF4A (397 aa).

Residues tyrosine 23 to glutamine 51 carry the Q motif motif. The Helicase ATP-binding domain maps to isoleucine 54–isoleucine 224. Alanine 67 to threonine 74 lines the ATP pocket. The DEAD box signature appears at aspartate 172–aspartate 175. Residues glycine 235–phenylalanine 396 form the Helicase C-terminal domain.

It belongs to the DEAD box helicase family. eIF4A subfamily. In terms of assembly, component of the eIF4F complex, which composition varies with external and internal environmental conditions. It is composed of at least eIF4A, eIF4E and eIF4G.

Its subcellular location is the cytoplasm. It carries out the reaction ATP + H2O = ADP + phosphate + H(+). Functionally, ATP-dependent RNA helicase which is a subunit of the eIF4F complex involved in cap recognition and is required for mRNA binding to ribosome. In the current model of translation initiation, eIF4A unwinds RNA secondary structures in the 5'-UTR of mRNAs which is necessary to allow efficient binding of the small ribosomal subunit, and subsequent scanning for the initiator codon. The chain is ATP-dependent RNA helicase eIF4A (TIF1) from Debaryomyces hansenii (strain ATCC 36239 / CBS 767 / BCRC 21394 / JCM 1990 / NBRC 0083 / IGC 2968) (Yeast).